A 589-amino-acid chain; its full sequence is Protein sprouty (589 aa).

3 disordered regions span residues 1 to 37 (MDRRNGGDPLAPPRPPKLLPRVHRPRAPEPTLSGVDH), 102 to 194 (RPSS…RPES), and 239 to 320 (LHLQ…MGLG). Composition is skewed to low complexity over residues 104-135 (SSLSRNSSTASSTTATGISVSGSGSVSGSSSS) and 148-162 (NNSISNNNNNSINNN). Residues 163–172 (FLSHFQSAEP) show a composition bias toward polar residues. Residues 239–272 (LHLQQHQQHLQQQQQQQQQQQQQQHLQHQQNQQH) are compositionally biased toward low complexity. The segment covering 276–286 (ATTTQATSVGS) has biased composition (polar residues). Residues 380–499 (RCGRCRCEQC…CYGRFAGRGC (120 aa)) form the SPR domain.

The protein belongs to the sprouty family. Interacts with DRK and RasGAP1 proteins of the Ras pathway. As to expression, in ovary, expressed from stage 7 of oogenesis in the posterior follicle cells and during stage 9 when the follicle cells migrate posteriorly over the oocyte nucleus, expression is seen in the dorsal and lateral cells and is excluded from the ventral cells. Once the migration of follicle cells is complete expressed in the dorsal-anterior corner of the egg chamber. Expressed in the embryonic tracheal system, developing eye imaginal disk, embryonic chordotonal organ precursors, midline glia and wing imaginal disk.

It localises to the cell membrane. Inhibitor of tracheal branching that restricts branch budding by antagonizing the BNL-FGF pathway (BNL: branchless, an fgf inducer of branching). Acts as an antagonist of EGFR-mediated signaling in the eye (where it is important for cell determination) midline glia, chordotonal organs, wing and ovarian follicle cells. In Drosophila melanogaster (Fruit fly), this protein is Protein sprouty (sty).